Here is a 198-residue protein sequence, read N- to C-terminus: Chitin synthase 2 (198 aa).

The protein belongs to the chitin synthase family. Class III subfamily.

It is found in the cell membrane. It carries out the reaction [(1-&gt;4)-N-acetyl-beta-D-glucosaminyl](n) + UDP-N-acetyl-alpha-D-glucosamine = [(1-&gt;4)-N-acetyl-beta-D-glucosaminyl](n+1) + UDP + H(+). Functionally, polymerizes chitin, a structural polymer of the cell wall and septum, by transferring the sugar moiety of UDP-GlcNAc to the non-reducing end of the growing chitin polymer. The chain is Chitin synthase 2 (CHS2) from Rhinocladiella atrovirens.